Reading from the N-terminus, the 215-residue chain is Deoxyribose-phosphate aldolase (215 aa).

The active-site Proton donor/acceptor is the aspartate 90. Lysine 152 functions as the Schiff-base intermediate with acetaldehyde in the catalytic mechanism. Lysine 181 functions as the Proton donor/acceptor in the catalytic mechanism.

This sequence belongs to the DeoC/FbaB aldolase family. DeoC type 1 subfamily.

The protein resides in the cytoplasm. It catalyses the reaction 2-deoxy-D-ribose 5-phosphate = D-glyceraldehyde 3-phosphate + acetaldehyde. It participates in carbohydrate degradation; 2-deoxy-D-ribose 1-phosphate degradation; D-glyceraldehyde 3-phosphate and acetaldehyde from 2-deoxy-alpha-D-ribose 1-phosphate: step 2/2. Its function is as follows. Catalyzes a reversible aldol reaction between acetaldehyde and D-glyceraldehyde 3-phosphate to generate 2-deoxy-D-ribose 5-phosphate. This chain is Deoxyribose-phosphate aldolase, found in Ureaplasma parvum serovar 3 (strain ATCC 27815 / 27 / NCTC 11736).